We begin with the raw amino-acid sequence, 217 residues long: Proteasome subunit beta (217 aa).

A propeptide spans 1–14 (MIANNDQYKEYMKG) (removed in mature form; by autocatalysis). T15 (nucleophile) is an active-site residue.

This sequence belongs to the peptidase T1B family. As to quaternary structure, the 20S proteasome core is composed of 14 alpha and 14 beta subunits that assemble into four stacked heptameric rings, resulting in a barrel-shaped structure. The two inner rings, each composed of seven catalytic beta subunits, are sandwiched by two outer rings, each composed of seven alpha subunits. The catalytic chamber with the active sites is on the inside of the barrel. Has a gated structure, the ends of the cylinder being occluded by the N-termini of the alpha-subunits. Is capped at one or both ends by the proteasome regulatory ATPase, PAN.

It is found in the cytoplasm. It catalyses the reaction Cleavage of peptide bonds with very broad specificity.. The formation of the proteasomal ATPase PAN-20S proteasome complex, via the docking of the C-termini of PAN into the intersubunit pockets in the alpha-rings, triggers opening of the gate for substrate entry. Interconversion between the open-gate and close-gate conformations leads to a dynamic regulation of the 20S proteasome proteolysis activity. In terms of biological role, component of the proteasome core, a large protease complex with broad specificity involved in protein degradation. The polypeptide is Proteasome subunit beta (Methanococcus aeolicus (strain ATCC BAA-1280 / DSM 17508 / OCM 812 / Nankai-3)).